Reading from the N-terminus, the 662-residue chain is ATP-dependent zinc metalloprotease YME1 homolog (662 aa).

206–213 (GPPGVGKT) provides a ligand contact to ATP. Zn(2+) is bound at residue His425. Glu426 is a catalytic residue. Residues His429 and Asp503 each contribute to the Zn(2+) site.

The protein in the N-terminal section; belongs to the AAA ATPase family. This sequence in the C-terminal section; belongs to the peptidase M41 family. Zn(2+) is required as a cofactor.

Functionally, putative ATP-dependent protease. This Schistosoma mansoni (Blood fluke) protein is ATP-dependent zinc metalloprotease YME1 homolog.